The following is a 377-amino-acid chain: uncharacterized protein (377 aa).

Disordered regions lie at residues 10-79 (YSDG…NVNN), 91-141 (KKNN…DKEE), 182-257 (EAKK…TTTT), 265-284 (ENENQEKENNDNDNDNEPIE), and 289-326 (LEFNKFEEKPIKEVKVNTASSNKRNKKRNNPKKVKEEP). Low complexity-rich tracts occupy residues 14-24 (IPQPTITPPTQ), 46-79 (NKNNRNNKNNVDNNNNNNNNNNNNEKQNQTNVNN), and 93-124 (NNNNNNNNNNNNNNNNNNNNNNKNKYNKFNDN). Composition is skewed to basic and acidic residues over residues 182-196 (EAKKKEEEDARKRGE) and 209-218 (QTPDKKKKLE). The segment covering 221 to 257 (TSKNNNKSSTTKTELTNTTTNTSSTTNPTTDTTTTTT) has biased composition (low complexity). Basic and acidic residues-rich tracts occupy residues 265–274 (ENENQEKENN) and 292–303 (NKFEEKPIKEVK). A compositionally biased stretch (basic residues) spans 311 to 320 (KRNKKRNNPK).

This is an uncharacterized protein from Dictyostelium discoideum (Social amoeba).